The following is a 260-amino-acid chain: MFDIGVNLTSTQFAKDREQVVARARDAGVTGLLITGTNALESQQAQRLAEWHPGYCWSTAGVHPHHASAWSAETANTLRRLAESEQVVAIGECGLDFNRNFSAHDQQEYAFDAQLQLAAELQLPVFLHCREAHDRFAAILQPWLPKLVGAVAHCFTGTREELEACLAMGLSIGITGWVCDERRGMELRELLPLIPAERLLLETDAPWLLPRDMHPRPTSRRNEPCFLPHIVQQVALWRNEAAETLGAQVDHNARQLFRLA.

3 residues coordinate a divalent metal cation: Glu-92, His-128, and His-153.

The protein belongs to the metallo-dependent hydrolases superfamily. TatD-type hydrolase family. TatD subfamily. As to quaternary structure, monomer. Requires Mg(2+) as cofactor.

The protein resides in the cytoplasm. Its function is as follows. 3'-5' exonuclease that prefers single-stranded DNA and RNA. May play a role in the H(2)O(2)-induced DNA damage repair. This is 3'-5' ssDNA/RNA exonuclease TatD from Pantoea sp. (strain At-9b).